We begin with the raw amino-acid sequence, 337 residues long: Fructose-1,6-bisphosphatase class 1 (337 aa).

Residues glutamate 90, aspartate 112, leucine 114, and aspartate 115 each contribute to the Mg(2+) site. Substrate is bound by residues 115–118 (DGSS), asparagine 211, and lysine 277. Glutamate 283 is a binding site for Mg(2+).

Belongs to the FBPase class 1 family. As to quaternary structure, homotetramer. Mg(2+) is required as a cofactor.

Its subcellular location is the cytoplasm. It catalyses the reaction beta-D-fructose 1,6-bisphosphate + H2O = beta-D-fructose 6-phosphate + phosphate. The protein operates within carbohydrate biosynthesis; gluconeogenesis. The polypeptide is Fructose-1,6-bisphosphatase class 1 (Azotobacter vinelandii (strain DJ / ATCC BAA-1303)).